Reading from the N-terminus, the 323-residue chain is Pantothenate kinase (323 aa).

101 to 108 (GSVAVGKS) lines the ATP pocket.

The protein belongs to the prokaryotic pantothenate kinase family.

Its subcellular location is the cytoplasm. The enzyme catalyses (R)-pantothenate + ATP = (R)-4'-phosphopantothenate + ADP + H(+). It participates in cofactor biosynthesis; coenzyme A biosynthesis; CoA from (R)-pantothenate: step 1/5. The polypeptide is Pantothenate kinase (Xanthobacter autotrophicus (strain ATCC BAA-1158 / Py2)).